The primary structure comprises 231 residues: Allergen Ani s 10 (231 aa).

Residues 1-19 (MHLITALVLLLQLIHFITS) form the signal peptide. 7 consecutive repeat copies span residues 28–56 (GGPG…QQNI), 57–85 (GGPG…QENI), 86–114 (GGPG…QQSI), 115–143 (EGPG…QQSI), 144–172 (EGPG…QQNI), 173–201 (GGPG…QQNI), and 204–231 (GGPG…SMQA). Residues 28-201 (GGPGPVVGGS…NEQAAEQQNI (174 aa)) are 6 X 29 AA tandem repeats of [EG]-G-P-G-P-V-[IV]-[SG]-G-S-G-I-G-[ND]-V-W-[NE]-K-A-N-E-[QP]-A-[AE]-[QEH]-Q-[EQ]-[NS]-I. 2 disordered regions span residues 107–126 (QAAH…GSGI) and 134–231 (NEQA…SMQA). 3 stretches are compositionally biased toward low complexity: residues 114 to 123 (IEGPGPVVSG), 143 to 152 (IEGPGPVVSG), and 177 to 187 (PVISGSGIGNV).

The polypeptide is Allergen Ani s 10 (Anisakis simplex (Herring worm)).